The chain runs to 462 residues: Lysyl endopeptidase (462 aa).

Positions methionine 1–alanine 24 are cleaved as a signal peptide. The propeptide occupies alanine 25 to lysine 211. Disulfide bonds link cysteine 224–cysteine 435, cysteine 230–cysteine 305, and cysteine 262–cysteine 284. Catalysis depends on charge relay system residues histidine 283, aspartate 333, and serine 409.

The protein belongs to the peptidase S1 family. In terms of processing, experiments performed in E.coli. Processing of pro-endopeptidase to mature endopeptidase is probably autocatalytic, as mutations in the probable active site residues prevent processing, and purified inactive pro-endopeptidase disappears in the presence of active endopeptidase.

The protein resides in the secreted. It carries out the reaction Preferential cleavage: Lys-|-Xaa, including Lys-|-Pro.. In terms of biological role, lysine-specific endoprotease. Involved in corneal virulence. This chain is Lysyl endopeptidase (prpL), found in Pseudomonas aeruginosa (strain ATCC 15692 / DSM 22644 / CIP 104116 / JCM 14847 / LMG 12228 / 1C / PRS 101 / PAO1).